The chain runs to 59 residues: Large ribosomal subunit protein uL30 (59 aa).

The protein belongs to the universal ribosomal protein uL30 family. As to quaternary structure, part of the 50S ribosomal subunit.

This chain is Large ribosomal subunit protein uL30, found in Leptospira biflexa serovar Patoc (strain Patoc 1 / ATCC 23582 / Paris).